Reading from the N-terminus, the 59-residue chain is Large ribosomal subunit protein bL32 (59 aa).

It belongs to the bacterial ribosomal protein bL32 family.

This chain is Large ribosomal subunit protein bL32, found in Anaeromyxobacter dehalogenans (strain 2CP-C).